The following is a 33-amino-acid chain: Cytochrome b6-f complex subunit 8 (33 aa).

Residues leucine 2–valine 22 form a helical membrane-spanning segment.

The protein belongs to the PetN family. In terms of assembly, the 4 large subunits of the cytochrome b6-f complex are cytochrome b6, subunit IV (17 kDa polypeptide, PetD), cytochrome f and the Rieske protein, while the 4 small subunits are PetG, PetL, PetM and PetN. The complex functions as a dimer.

It is found in the cellular thylakoid membrane. Component of the cytochrome b6-f complex, which mediates electron transfer between photosystem II (PSII) and photosystem I (PSI), cyclic electron flow around PSI, and state transitions. The polypeptide is Cytochrome b6-f complex subunit 8 (Synechococcus sp. (strain WH7803)).